The primary structure comprises 273 residues: Ribosomal RNA small subunit methyltransferase A (273 aa).

S-adenosyl-L-methionine-binding residues include Asn-23, Ile-25, Gly-50, Glu-72, Asp-97, and Asn-116.

It belongs to the class I-like SAM-binding methyltransferase superfamily. rRNA adenine N(6)-methyltransferase family. RsmA subfamily.

It localises to the cytoplasm. The enzyme catalyses adenosine(1518)/adenosine(1519) in 16S rRNA + 4 S-adenosyl-L-methionine = N(6)-dimethyladenosine(1518)/N(6)-dimethyladenosine(1519) in 16S rRNA + 4 S-adenosyl-L-homocysteine + 4 H(+). Its function is as follows. Specifically dimethylates two adjacent adenosines (A1518 and A1519) in the loop of a conserved hairpin near the 3'-end of 16S rRNA in the 30S particle. May play a critical role in biogenesis of 30S subunits. The sequence is that of Ribosomal RNA small subunit methyltransferase A from Rickettsia akari (strain Hartford).